A 157-amino-acid chain; its full sequence is GDP-mannose mannosyl hydrolase (157 aa).

Residues 2-3 (FL), Phe-8, and Arg-36 each bind substrate. Positions 3–153 (LRQEDFAAVV…SRAYFSPDAP (151 aa)) constitute a Nudix hydrolase domain. Mg(2+) is bound by residues Gly-49, Glu-69, and Gln-122. A Nudix box motif is present at residues 50-71 (GRVCKDETLEAAFARLTQAELG).

The protein belongs to the Nudix hydrolase family. As to quaternary structure, homodimer. Requires Mg(2+) as cofactor.

It catalyses the reaction GDP-alpha-D-mannose + H2O = D-mannose + GDP + H(+). Its function is as follows. Hydrolyzes GDP-mannose. This Salmonella typhi protein is GDP-mannose mannosyl hydrolase.